The primary structure comprises 414 residues: Glucose-6-phosphate isomerase (414 aa).

Residue Glu266 is the Proton donor of the active site. Active-site residues include His292 and Lys405.

It belongs to the GPI family.

It is found in the cytoplasm. The catalysed reaction is alpha-D-glucose 6-phosphate = beta-D-fructose 6-phosphate. It participates in carbohydrate biosynthesis; gluconeogenesis. The protein operates within carbohydrate degradation; glycolysis; D-glyceraldehyde 3-phosphate and glycerone phosphate from D-glucose: step 2/4. Catalyzes the reversible isomerization of glucose-6-phosphate to fructose-6-phosphate. This Thermus thermophilus (strain ATCC BAA-163 / DSM 7039 / HB27) protein is Glucose-6-phosphate isomerase.